The chain runs to 317 residues: Adenine deaminase (317 aa).

Residues H14, H16, and H194 each coordinate Zn(2+). E197 (proton donor) is an active-site residue. D275 contacts Zn(2+). Substrate is bound at residue D276.

Belongs to the metallo-dependent hydrolases superfamily. Adenosine and AMP deaminases family. Adenine deaminase type 2 subfamily. Zn(2+) serves as cofactor.

It catalyses the reaction adenine + H2O + H(+) = hypoxanthine + NH4(+). Catalyzes the hydrolytic deamination of adenine to hypoxanthine. Plays an important role in the purine salvage pathway and in nitrogen catabolism. In Pseudomonas savastanoi pv. phaseolicola (strain 1448A / Race 6) (Pseudomonas syringae pv. phaseolicola (strain 1448A / Race 6)), this protein is Adenine deaminase.